Here is a 620-residue protein sequence, read N- to C-terminus: Origin recognition complex subunit 2 (620 aa).

Residues 1–184 (MLNGEDFVEH…PSKKSLTTNH (184 aa)) form a disordered region. The segment covering 13–23 (ILSSPAKSRNV) has biased composition (polar residues). Residues 26–36 (KRVDPHGERQL) are compositionally biased toward basic and acidic residues. At Thr60 the chain carries Phosphothreonine. Basic and acidic residues predominate over residues 83-101 (KIQEELTDRIKKDEKDTIS). Over residues 113–127 (SGNVNEESKTSNNKQ) the composition is skewed to polar residues. Positions 128-143 (VMEKTGIKEKREREKI) are enriched in basic and acidic residues. The segment covering 145-166 (VATTTYEDNVTPQTDDNFVSNS) has biased composition (polar residues). Thr187 is modified (phosphothreonine). Ser188 is modified (phosphoserine). The segment covering 204–218 (STSPGKLTLSRNFTP) has biased composition (polar residues). The disordered stretch occupies residues 204 to 225 (STSPGKLTLSRNFTPTPVPKNK).

Belongs to the ORC2 family. Component of the origin recognition complex (ORC) composed of at least ORC1, ORC2, ORC3, ORC4, ORC5 and ORC6. Interacts with MCM10 and TAH11.

Its subcellular location is the nucleus. Its function is as follows. Component of the origin recognition complex (ORC) that binds origins of replication. It has a role in both chromosomal replication and mating type transcriptional silencing. Binds to the ARS consensus sequence (ACS) of origins of replication. The protein is Origin recognition complex subunit 2 (ORC2) of Saccharomyces cerevisiae (strain ATCC 204508 / S288c) (Baker's yeast).